Consider the following 310-residue polypeptide: Quinolinate synthase 2 (310 aa).

H30 and S47 together coordinate iminosuccinate. C92 is a binding site for [4Fe-4S] cluster. Residues 118–120 and S135 contribute to the iminosuccinate site; that span reads YVN. C177 contacts [4Fe-4S] cluster. Iminosuccinate contacts are provided by residues 203–205 and T220; that span reads HPE. Position 265 (C265) interacts with [4Fe-4S] cluster.

Belongs to the quinolinate synthase family. Type 2 subfamily. It depends on [4Fe-4S] cluster as a cofactor.

Its subcellular location is the cytoplasm. The catalysed reaction is iminosuccinate + dihydroxyacetone phosphate = quinolinate + phosphate + 2 H2O + H(+). It functions in the pathway cofactor biosynthesis; NAD(+) biosynthesis; quinolinate from iminoaspartate: step 1/1. Functionally, catalyzes the condensation of iminoaspartate with dihydroxyacetone phosphate to form quinolinate. The sequence is that of Quinolinate synthase 2 from Methanosarcina acetivorans (strain ATCC 35395 / DSM 2834 / JCM 12185 / C2A).